The primary structure comprises 67 residues: Large ribosomal subunit protein bL31 (67 aa).

C16, C18, C36, and C39 together coordinate Zn(2+).

The protein belongs to the bacterial ribosomal protein bL31 family. Type A subfamily. In terms of assembly, part of the 50S ribosomal subunit. Requires Zn(2+) as cofactor.

In terms of biological role, binds the 23S rRNA. This chain is Large ribosomal subunit protein bL31, found in Aliarcobacter butzleri (strain RM4018) (Arcobacter butzleri).